A 786-amino-acid polypeptide reads, in one-letter code: Zinc finger transcription factor YRM1 (786 aa).

Residues 1 to 25 (MSKRGSLQDRASPSEETVKKAQKRR) are disordered. The zn(2)-C6 fungal-type DNA-binding region spans 31–59 (CAFCRKRKLRCDQQKPMCSTCKTRGRSGC). The segment at 721–747 (PLAGNSPGLPPEEVRNNSENASHNNET) is disordered. The segment covering 737–747 (NSENASHNNET) has biased composition (polar residues).

The protein localises to the cytoplasm. It localises to the nucleus. Functionally, transcription factor involved in the regulation of multidrug resistance genes. Acts in concert with YRR1. This chain is Zinc finger transcription factor YRM1 (YRM1), found in Saccharomyces cerevisiae (strain ATCC 204508 / S288c) (Baker's yeast).